The following is a 344-amino-acid chain: Follistatin (344 aa).

The N-terminal stretch at Met1–Ala29 is a signal peptide. One can recognise a TB domain in the interval Gly30 to Gly103. Intrachain disulfides connect Cys32/Cys55, Cys42/Cys88, Cys56/Cys91, Cys95/Cys106, Cys100/Cys116, Cys118/Cys150, Cys122/Cys143, and Cys132/Cys164. Residues Thr94–Val117 enclose the Follistatin-like 1 domain. Kazal-like domains follow at residues Asn112 to Lys166, Asn186 to Lys241, and Lys261 to Ser318. N-linked (GlcNAc...) asparagine glycosylation occurs at Asn124. One can recognise a Follistatin-like 2 domain in the interval Thr167 to Val190. Cystine bridges form between Cys192-Cys225, Cys196-Cys218, and Cys207-Cys239. Positions Ser244–Ser268 constitute a Follistatin-like 3 domain. Intrachain disulfides connect Cys270–Cys302, Cys274–Cys295, and Cys284–Cys316. An N-linked (GlcNAc...) asparagine glycan is attached at Asn288. A disordered region spans residues Cys316–Trp344. Over residues Glu321–Asp333 the composition is skewed to acidic residues.

In terms of assembly, interacts with GDF11. Interacts with activin A/INHBA. Interacts with myostatin/MSTN.

The protein resides in the secreted. The protein localises to the nucleus. Its subcellular location is the nucleolus. Functionally, multifunctional regulatory protein whose primary function is to antagonize members of the transforming growth factor beta (TGF-beta) superfamily including activin, myostatin, GDF11 or bone morphogenetic proteins (BMPs). Mechanistically, binds to these ligands in the extracellular space, blocking their type II receptor-binding site to inhibit downstream signaling. Plays an essential role in muscle fiber formation and growth both by preventing the repressive effects of myostatin and through SMAD3/AKT/mTOR signaling independently of myostatin. Also promotes neural differentiation by antagonizing the action BMP4. Acts as a specific inhibitor of the biosynthesis and secretion of pituitary follicle stimulating hormone (FSH) by sequestering activin A/INHBA. On the other hand, translocates into the nucleus where it down-regulates rRNA synthesis and ribosome biogenesis to maintain cellular energy homeostasis by binding to rDNA. This chain is Follistatin, found in Bos taurus (Bovine).